The sequence spans 99 residues: Integration host factor subunit alpha (99 aa).

It belongs to the bacterial histone-like protein family. Heterodimer of an alpha and a beta chain.

Functionally, this protein is one of the two subunits of integration host factor, a specific DNA-binding protein that functions in genetic recombination as well as in transcriptional and translational control. This chain is Integration host factor subunit alpha, found in Nitrosococcus oceani (strain ATCC 19707 / BCRC 17464 / JCM 30415 / NCIMB 11848 / C-107).